We begin with the raw amino-acid sequence, 261 residues long: Potassium/proton antiporter CemA (261 aa).

3 consecutive transmembrane segments (helical) span residues 138 to 158 (IISHLLTNLIGFAFISAYLIL), 184 to 204 (FLILLATDLCIGFHSPHGWEL), and 221 to 241 (IISGLVSTFPVILDTILKYWI).

This sequence belongs to the CemA family.

The protein localises to the plastid. It localises to the chloroplast inner membrane. The enzyme catalyses K(+)(in) + H(+)(out) = K(+)(out) + H(+)(in). Its function is as follows. Contributes to K(+)/H(+) antiport activity by supporting proton efflux to control proton extrusion and homeostasis in chloroplasts in a light-dependent manner to modulate photosynthesis. Prevents excessive induction of non-photochemical quenching (NPQ) under continuous-light conditions. Indirectly promotes efficient inorganic carbon uptake into chloroplasts. In Pinus koraiensis (Korean pine), this protein is Potassium/proton antiporter CemA.